A 207-amino-acid chain; its full sequence is Putative 3-methyladenine DNA glycosylase (207 aa).

Residues Pro-182–Pro-193 are compositionally biased toward low complexity. The disordered stretch occupies residues Pro-182–Pro-207. Over residues Arg-198–Pro-207 the composition is skewed to basic residues.

It belongs to the DNA glycosylase MPG family.

In Anaeromyxobacter dehalogenans (strain 2CP-C), this protein is Putative 3-methyladenine DNA glycosylase.